A 332-amino-acid polypeptide reads, in one-letter code: Succinylglutamate desuccinylase (332 aa).

The Zn(2+) site is built by His59, Glu62, and His151. Glu215 is an active-site residue.

Belongs to the AspA/AstE family. Succinylglutamate desuccinylase subfamily. It depends on Zn(2+) as a cofactor.

The enzyme catalyses N-succinyl-L-glutamate + H2O = L-glutamate + succinate. It participates in amino-acid degradation; L-arginine degradation via AST pathway; L-glutamate and succinate from L-arginine: step 5/5. In terms of biological role, transforms N(2)-succinylglutamate into succinate and glutamate. The sequence is that of Succinylglutamate desuccinylase from Pseudomonas aeruginosa (strain LESB58).